Consider the following 670-residue polypeptide: ATP-dependent RNA helicase DDX18 (670 aa).

2 stretches are compositionally biased toward polar residues: residues 31–42 (SNLTLSETQNGD) and 83–105 (VTKSPQKSTVLTNGEAAMQSSNS). A disordered region spans residues 31-169 (SNLTLSETQN…ESEVPSLPLG (139 aa)). Residues 117-154 (MVNDAEPDTKKAKTENKGKSEEESAETTKETENNVEKP) are compositionally biased toward basic and acidic residues. Residues 179–207 (FASLCNLVNENTLKAIKEMGFTNMTEIQH) carry the Q motif motif. The Helicase ATP-binding domain maps to 210-385 (IRPLLEGRDL…RISLKKEPLY (176 aa)). 223–230 (AKTGSGKT) contacts ATP. Positions 333–336 (DEAD) match the DEAD box motif. In terms of domain architecture, Helicase C-terminal spans 399 to 569 (GLEQGYVVCP…DIQSQLEKLI (171 aa)).

Belongs to the DEAD box helicase family. DDX18/HAS1 subfamily. Interacts with NOL8; the interaction is RNA-dependent. Interacts with PRC2 complex components EZH2, SUZ2 and JARID2; these interactions prevent deposition of the repressive H3K27me3 mark onto rDNA in pluripotent cells.

The protein localises to the nucleus. It is found in the nucleolus. It localises to the chromosome. It carries out the reaction ATP + H2O = ADP + phosphate + H(+). ATP-dependent RNA helicase that plays a role in the regulation of R-loop homeostasis in both endogenous R-loop-prone regions and at sites of DNA damage. At endogenous loci such as actively transcribed genes, may act as a helicase to resolve the formation of R-loop during transcription and prevent the interference of R-loop with DNA-replication machinery. Also participates in the removal of DNA-lesion-associated R-loop. Plays an essential role for establishing pluripotency during embryogenesis and for pluripotency maintenance in embryonic stem cells. Mechanistically, prevents the polycomb repressive complex 2 (PRC2) from accessing rDNA loci and protects the active chromatin status in nucleolus. This Homo sapiens (Human) protein is ATP-dependent RNA helicase DDX18 (DDX18).